A 151-amino-acid polypeptide reads, in one-letter code: Ribosome-binding factor A (151 aa).

Residues 116–151 (DAEVARAAANARPAGDPDPYREPRPADDDDEDDEDE) are disordered. Positions 120–129 (ARAAANARPA) are enriched in low complexity. Residues 142 to 151 (DDDDEDDEDE) are compositionally biased toward acidic residues.

Belongs to the RbfA family. As to quaternary structure, monomer. Binds 30S ribosomal subunits, but not 50S ribosomal subunits or 70S ribosomes.

It localises to the cytoplasm. In terms of biological role, one of several proteins that assist in the late maturation steps of the functional core of the 30S ribosomal subunit. Associates with free 30S ribosomal subunits (but not with 30S subunits that are part of 70S ribosomes or polysomes). Required for efficient processing of 16S rRNA. May interact with the 5'-terminal helix region of 16S rRNA. This chain is Ribosome-binding factor A, found in Thermobifida fusca (strain YX).